Reading from the N-terminus, the 515-residue chain is MEKFEGYSEKQKSRQHYFVYPLLFQEYIYAFAHDYGLNGSEPVEIFGCNNKKFSSILVKRLIIRMYQQNFWINSVNYPNQDRLFDHRNYFYSEFYSQILSEGFGIVVEIPLSLGQLSCPEEKEIPKFQNLQSIHSIFPFLEDKFLHLHYLSHIEIPYPIHLEILVQLLEYRIQDVPSLHLLRFFLHYYSNWNSLITSMKSIFLLKKENKRLFRFLYNSYVSEYEFFLLFLRKQSSCLRLTSSGTFLERIIFSGKMEHFGVMYPGFFRKTIWFFMDPLMHYVRYQGKAILASKGTLLLKKKWKSYLVNFSQYFFSFWTQPQRIRLNQLTNSCFDFLGYLSSVPINTLLVRNQMLENSFLIDTRMKKFDTTVPATPLVGSLSKAQFCTGSGHPISKPVWTDLSDWDILDRFGRICRNLFHYYSGSSKKQTLYRLKYILRLSCARTLARKHKSTVRTFMQRLGLVFLEEFFTEEEQVFSLMFTKTKTIHFSFHGSQSERIWYLDIIRINDLVNPLTLN.

Belongs to the intron maturase 2 family. MatK subfamily.

The protein localises to the plastid. The protein resides in the chloroplast. Functionally, usually encoded in the trnK tRNA gene intron. Probably assists in splicing its own and other chloroplast group II introns. The sequence is that of Maturase K from Sorghum bicolor (Sorghum).